The sequence spans 509 residues: Maturase K (509 aa).

The protein belongs to the intron maturase 2 family. MatK subfamily.

It localises to the plastid. The protein localises to the chloroplast. Functionally, usually encoded in the trnK tRNA gene intron. Probably assists in splicing its own and other chloroplast group II introns. This chain is Maturase K, found in Banksia cuneata (Quairading banksia).